We begin with the raw amino-acid sequence, 152 residues long: Transcriptional repressor NrdR (152 aa).

A zinc finger spans residues 3 to 33 (CSICKKGETSVVDSRPTEDGTAIRRRRLCVC). One can recognise an ATP-cone domain in the interval 48-138 (IMVVKKNGRK…VYRNFREEKD (91 aa)).

It belongs to the NrdR family. Requires Zn(2+) as cofactor.

Its function is as follows. Negatively regulates transcription of bacterial ribonucleotide reductase nrd genes and operons by binding to NrdR-boxes. This Pelagibacter ubique (strain HTCC1062) protein is Transcriptional repressor NrdR.